The sequence spans 587 residues: NADH-quinone oxidoreductase subunit C/D (587 aa).

Positions 1-178 are NADH dehydrogenase I subunit C; the sequence is MAAPTTEHAE…EPFSLPDDVQ (178 aa). The segment at 202–587 is NADH dehydrogenase I subunit D; sequence DFLFLNLGPN…IDFVMADVDR (386 aa).

In the N-terminal section; belongs to the complex I 30 kDa subunit family. The protein in the C-terminal section; belongs to the complex I 49 kDa subunit family. NDH-1 is composed of 13 different subunits. Subunits NuoB, CD, E, F, and G constitute the peripheral sector of the complex.

Its subcellular location is the cell inner membrane. The enzyme catalyses a quinone + NADH + 5 H(+)(in) = a quinol + NAD(+) + 4 H(+)(out). Functionally, NDH-1 shuttles electrons from NADH, via FMN and iron-sulfur (Fe-S) centers, to quinones in the respiratory chain. The immediate electron acceptor for the enzyme in this species is believed to be ubiquinone. Couples the redox reaction to proton translocation (for every two electrons transferred, four hydrogen ions are translocated across the cytoplasmic membrane), and thus conserves the redox energy in a proton gradient. The chain is NADH-quinone oxidoreductase subunit C/D from Methylococcus capsulatus (strain ATCC 33009 / NCIMB 11132 / Bath).